Consider the following 471-residue polypeptide: Tryptophanase (471 aa).

N6-acetyllysine occurs at positions 5, 115, and 156. K270 carries the post-translational modification N6-(pyridoxal phosphate)lysine. The residue at position 450 (K450) is an N6-acetyllysine.

This sequence belongs to the beta-eliminating lyase family. In terms of assembly, homotetramer. Pyridoxal 5'-phosphate serves as cofactor.

It carries out the reaction L-tryptophan + H2O = indole + pyruvate + NH4(+). It participates in amino-acid degradation; L-tryptophan degradation via pyruvate pathway; indole and pyruvate from L-tryptophan: step 1/1. The sequence is that of Tryptophanase from Escherichia coli O139:H28 (strain E24377A / ETEC).